The primary structure comprises 145 residues: Hemoglobin subunit beta (145 aa).

Residues 1–145 (MLTAEEKAAV…VANALAHRYH (145 aa)) form the Globin domain. Residue Thr-11 is modified to Phosphothreonine. Lys-58 is modified (N6-acetyllysine). Residue His-62 coordinates heme b. Lys-81 bears the N6-acetyllysine mark. Residue His-91 coordinates heme b. Cys-92 carries the S-nitrosocysteine modification.

It belongs to the globin family. In terms of assembly, heterotetramer of two alpha chains and two beta chains. Red blood cells.

In terms of biological role, involved in oxygen transport from the lung to the various peripheral tissues. In Ovis aries musimon (Mouflon), this protein is Hemoglobin subunit beta (HBB).